The following is a 757-amino-acid chain: Catalase-peroxidase (757 aa).

The tract at residues 1–28 (MENQSNDISKCPFHNGSMDNQAASGTKN) is disordered. A compositionally biased stretch (polar residues) spans 17–28 (SMDNQAASGTKN). A cross-link (tryptophyl-tyrosyl-methioninium (Trp-Tyr) (with M-273)) is located at residues 100-247 (WHSAGTYRVH…LAAVQMGLIY (148 aa)). The active-site Proton acceptor is the His101. Residues 247–273 (YVNPEGPDGNPDPILAAKDIRDTFGRM) constitute a cross-link (tryptophyl-tyrosyl-methioninium (Tyr-Met) (with W-100)). His288 provides a ligand contact to heme b.

This sequence belongs to the peroxidase family. Peroxidase/catalase subfamily. In terms of assembly, homodimer or homotetramer. Requires heme b as cofactor. Post-translationally, formation of the three residue Trp-Tyr-Met cross-link is important for the catalase, but not the peroxidase activity of the enzyme.

It carries out the reaction H2O2 + AH2 = A + 2 H2O. The enzyme catalyses 2 H2O2 = O2 + 2 H2O. Functionally, bifunctional enzyme with both catalase and broad-spectrum peroxidase activity. The polypeptide is Catalase-peroxidase (Flavobacterium johnsoniae (strain ATCC 17061 / DSM 2064 / JCM 8514 / BCRC 14874 / CCUG 350202 / NBRC 14942 / NCIMB 11054 / UW101) (Cytophaga johnsonae)).